A 191-amino-acid chain; its full sequence is Signal peptidase IB (191 aa).

Over 1–7 (MKKELLE) the chain is Cytoplasmic. A helical transmembrane segment spans residues 8–28 (WIISIAVAFVILFIVGKFIVT). At 29 to 191 (PYTIKGESMD…HNFNPENTKN (163 aa)) the chain is on the extracellular side. Active-site residues include serine 36 and lysine 77.

This sequence belongs to the peptidase S26 family.

The protein localises to the cell membrane. It carries out the reaction Cleavage of hydrophobic, N-terminal signal or leader sequences from secreted and periplasmic proteins.. In terms of biological role, essential for cell viability. The protein is Signal peptidase IB (spsB) of Staphylococcus aureus (strain Mu50 / ATCC 700699).